The chain runs to 341 residues: Basic membrane protein B (341 aa).

The N-terminal stretch at 1–14 (MRIAIFIFGILLTS) is a signal peptide. The N-palmitoyl cysteine moiety is linked to residue Cys-15. Residue Cys-15 is the site of S-diacylglycerol cysteine attachment.

It belongs to the BMP lipoprotein family. As to quaternary structure, monomer.

The protein resides in the cell inner membrane. In terms of biological role, may be part of an ABC-type nucleoside uptake system involved in the purine salvage pathway. This Borreliella afzelii (strain PKo) (Borrelia afzelii) protein is Basic membrane protein B (bmpB).